The sequence spans 85 residues: Glutaredoxin 1 (85 aa).

The Glutaredoxin domain maps to 1–85 (MQTVIFGRSG…AAWVKENLDA (85 aa)). A disulfide bridge links cysteine 11 with cysteine 14.

The protein belongs to the glutaredoxin family. In terms of assembly, monomer.

The disulfide bond functions as an electron carrier in the glutathione-dependent synthesis of deoxyribonucleotides by the enzyme ribonucleotide reductase. In addition, it is also involved in reducing some disulfides in a coupled system with glutathione reductase. This Shigella flexneri protein is Glutaredoxin 1 (grxA).